We begin with the raw amino-acid sequence, 623 residues long: uncharacterized protein (623 aa).

A GAF domain is found at 28–171 (TSAEVSQRVL…TIATLFAQVQ (144 aa)). A GGDEF domain is found at 212 to 345 (GPVAALFLDL…GGDSVAIFTA (134 aa)). One can recognise an EAL domain in the interval 354–609 (RNDIELHLRR…AMRHMLSARR (256 aa)).

This is an uncharacterized protein from Mycobacterium tuberculosis (strain CDC 1551 / Oshkosh).